A 203-amino-acid polypeptide reads, in one-letter code: HTH-type transcriptional regulator CymR (203 aa).

An HTH tetR-type domain is found at M13–I73. The H-T-H motif DNA-binding region spans R36–F55.

Functionally, involved in the repression of the cym and cmt operons which are responsible of the p-cymene degradation. This chain is HTH-type transcriptional regulator CymR, found in Pseudomonas putida (Arthrobacter siderocapsulatus).